A 144-amino-acid chain; its full sequence is MLVPKRVKHRREFRGKMRGAAKGGRNVDFGEYGLEALESHWITNRQIEAARVAMTRYMKRGGKVWIRIFPHKSYTSKGVGVRMGNGKGAPTGWVAVVKREKIMFEVGGVSEAVAKEALRLASNKLPIRTKIVSREEVGGQSNEG.

Belongs to the universal ribosomal protein uL16 family. In terms of assembly, part of the 50S ribosomal subunit.

In terms of biological role, binds 23S rRNA and is also seen to make contacts with the A and possibly P site tRNAs. In Lacticaseibacillus paracasei (strain ATCC 334 / BCRC 17002 / CCUG 31169 / CIP 107868 / KCTC 3260 / NRRL B-441) (Lactobacillus paracasei), this protein is Large ribosomal subunit protein uL16.